Reading from the N-terminus, the 819-residue chain is MGNSHTKEARDPNAPLSPHDPRSHASGHHASGSSSSRPRNRASRSDLGGLFGISAGSSSSTQPPYERRETKQEREARKLERERQARLIERERSLKEEHVDGGYLVTLGTYVGTEDFNKAVVRQLQIERRLAPFWRGLNDFSETWTEYQIVAAARGLPLPAADAIPPDELIPRPISATSPAASTQNIDSLMVPMGGRTQSTASDRSGSGLGSSLPSPTSAPSSKSPFKRSKGIAAALNLSSSRNNSTTDIAAPREIKLPHDPFVNGQPMEVFLYKDGSECPICFLYYPPYLNHTRCCDQPICSECFVQIKRADPHYPDGHGDAQNSERPPEEQAGLLISEPACCPYCQQPELGVTYDPPPFRRGLTYSSPTPHMGTMGTAMSSSSSLNSSLSPSSLASPTSMGHSRRRTQSLSANAPNVVTTDRVRPDWATKLAAQRAHIARRAAAATALHTAAFLMSNNEQQRSLRIGRFSRRNTAERTAPGPSTNAAASNSPARPEAAAAESESASPGTGEARSSSGRGIMGARRSRMEDLEEMMFAEAIRLSLAAEEERKRKAEKEERKEAKRKEKEDKKAAKAAAKSSGSGPYTGSSGNSSIAGSALSLPGLGLGRRRGNSAASNLRMEASVASAVAASGSGSPESATAAGGDKGKGVERPMAANSGDSSEHAEAGASSSMPAGSQPISSPQRPGGHSHLRQISNVSSVSDSSFVDASGGVADEGRTAATGVEPTPNMTSLSEVVDVLDEVDHAKSHDATEVQHLENASDNKPPSKDAGEAPSPPELVVTPGTPALNNEGFETNKQLDIKPTAQHDDQQQQRQQSA.

The span at 1–11 shows a compositional bias: basic and acidic residues; it reads MGNSHTKEARD. Disordered stretches follow at residues 1-79, 190-226, 367-419, 468-522, and 549-819; these read MGNS…ARKL, MVPMGGRTQSTASDRSGSGLGSSLPSPTSAPSSKSPF, SSPT…PNVV, GRFS…RGIM, and EERK…QQSA. Low complexity predominate over residues 28–37; it reads HHASGSSSSR. Residues 65 to 79 are compositionally biased toward basic and acidic residues; sequence YERRETKQEREARKL. Composition is skewed to low complexity over residues 210–224 and 374–402; these read GSSLPSPTSAPSSKS and GTMGTAMSSSSSLNSSLSPSSLASPTSMG. A compositionally biased stretch (polar residues) spans 409 to 419; it reads QSLSANAPNVV. A compositionally biased stretch (low complexity) spans 479-513; the sequence is TAPGPSTNAAASNSPARPEAAAAESESASPGTGEA. The span at 549-573 shows a compositional bias: basic and acidic residues; it reads EERKRKAEKEERKEAKRKEKEDKKA. Low complexity-rich tracts occupy residues 575–604 and 613–644; these read KAAAKSSGSGPYTGSSGNSSIAGSALSLPG and NSAASNLRMEASVASAVAASGSGSPESATAAG. Residues 674–685 are compositionally biased toward polar residues; that stretch reads MPAGSQPISSPQ. Positions 697-714 are enriched in low complexity; it reads SNVSSVSDSSFVDASGGV. Basic and acidic residues-rich tracts occupy residues 743-772 and 798-812; these read EVDHAKSHDATEVQHLENASDNKPPSKDAG and KQLDIKPTAQHDDQQ.

This sequence belongs to the SIP5 family.

Its subcellular location is the cytoplasm. Functionally, may negatively regulate the SNF1 kinase. In Pyricularia oryzae (strain 70-15 / ATCC MYA-4617 / FGSC 8958) (Rice blast fungus), this protein is Protein SIP5 (SIP5).